We begin with the raw amino-acid sequence, 26 residues long: Dermaseptin-J3 (26 aa).

A Valine amide modification is found at Val26.

Expressed by the skin glands.

Its subcellular location is the secreted. Has antimicrobial activity. The polypeptide is Dermaseptin-J3 (Phasmahyla jandaia (Jandaia leaf frog)).